Here is a 359-residue protein sequence, read N- to C-terminus: Peptide chain release factor 1 (359 aa).

The residue at position 236 (Gln-236) is an N5-methylglutamine.

It belongs to the prokaryotic/mitochondrial release factor family. Methylated by PrmC. Methylation increases the termination efficiency of RF1.

It localises to the cytoplasm. In terms of biological role, peptide chain release factor 1 directs the termination of translation in response to the peptide chain termination codons UAG and UAA. The polypeptide is Peptide chain release factor 1 (Streptococcus agalactiae serotype Ia (strain ATCC 27591 / A909 / CDC SS700)).